A 357-amino-acid polypeptide reads, in one-letter code: Tetraacyldisaccharide 4'-kinase (357 aa).

Residue 67–74 participates in ATP binding; sequence SVGGTGKT.

Belongs to the LpxK family.

It catalyses the reaction a lipid A disaccharide + ATP = a lipid IVA + ADP + H(+). It participates in glycolipid biosynthesis; lipid IV(A) biosynthesis; lipid IV(A) from (3R)-3-hydroxytetradecanoyl-[acyl-carrier-protein] and UDP-N-acetyl-alpha-D-glucosamine: step 6/6. Its function is as follows. Transfers the gamma-phosphate of ATP to the 4'-position of a tetraacyldisaccharide 1-phosphate intermediate (termed DS-1-P) to form tetraacyldisaccharide 1,4'-bis-phosphate (lipid IVA). This chain is Tetraacyldisaccharide 4'-kinase, found in Syntrophotalea carbinolica (strain DSM 2380 / NBRC 103641 / GraBd1) (Pelobacter carbinolicus).